A 432-amino-acid chain; its full sequence is Serine/threonine-protein kinase CDG1 (432 aa).

2 S-palmitoyl cysteine lipidation sites follow: cysteine 4 and cysteine 6. Positions leucine 15–isoleucine 24 are enriched in basic residues. Residues leucine 15–serine 47 form a disordered region. The segment covering arginine 25–proline 35 has biased composition (polar residues). Phosphoserine occurs at positions 44 and 47. In terms of domain architecture, Protein kinase spans phenylalanine 74–isoleucine 354. ATP contacts are provided by residues isoleucine 80–valine 88 and lysine 102. Tyrosine 147 bears the Phosphotyrosine mark. Residue aspartate 200 is the Proton acceptor of the active site. A phosphoserine mark is found at serine 204 and serine 234. Threonine 235 and threonine 240 each carry phosphothreonine. At tyrosine 248 the chain carries Phosphotyrosine.

The protein belongs to the protein kinase superfamily. Ser/Thr protein kinase family. As to quaternary structure, interacts with BSU1, BSL1 and BRI1. Phosphorylated at Ser-44, Ser-47 and Ser-234 by BRI1. Expressed at high levels in the stamen and pollen grains. Expressed at a very low level in vegetative tissues.

It localises to the cell membrane. It catalyses the reaction L-seryl-[protein] + ATP = O-phospho-L-seryl-[protein] + ADP + H(+). The catalysed reaction is L-threonyl-[protein] + ATP = O-phospho-L-threonyl-[protein] + ADP + H(+). Its activity is regulated as follows. Activated by phosphorylation at Ser-234. Its function is as follows. Serine/threonine-protein kinase involved in the positive regulation of brassinosteroid (BR) signaling and plant growth. Mediates BR signal transduction from BRI1 receptor kinase to BSU1 phosphatase. After activation by phosphorylation at Ser-234 by BRI1, CDG1 phosphorylates BSU1 at 'Ser-764' in the phosphatase domain, increasing the ability of BSU1 to inactivate the negative regulator of BR signaling ASK7/BIN2 by dephosphorylation at 'Tyr-200'. The full kinase activity of CDG1 is required for its biological function. The protein is Serine/threonine-protein kinase CDG1 of Arabidopsis thaliana (Mouse-ear cress).